The chain runs to 47 residues: MKKFRWVVLGIVVVVCLLLWAQVFNIMCDQDVQFFSGICAINKFIPW.

The helical transmembrane segment at 6–26 (WVVLGIVVVVCLLLWAQVFNI) threads the bilayer.

It belongs to the MgrB family. As to quaternary structure, may form homooligomers. Probably interacts with the periplasmic domain of PhoQ.

The protein localises to the cell inner membrane. PhoP-regulated transcription is redox-sensitive, being activated when the periplasm becomes more reducing. MgrB acts between DsbA/DsbB and PhoP/PhoQ in this pathway. Represses PhoP/PhoQ signaling, possibly by binding to the periplasmic domain of PhoQ, altering its activity and that of downstream effector PhoP. In Salmonella agona (strain SL483), this protein is PhoP/PhoQ regulator MgrB.